The chain runs to 102 residues: Pole-localizer protein TmaR (102 aa).

Positions 7–34 form a coiled coil; it reads IINQARRKNKLKRELQDNQKKIRDNQKR.

This sequence belongs to the pole-localizer TmaR family.

The protein localises to the cytoplasm. In terms of biological role, pole-localizer protein involved in the regulation of several cellular processes. This chain is Pole-localizer protein TmaR, found in Aliivibrio salmonicida (strain LFI1238) (Vibrio salmonicida (strain LFI1238)).